A 180-amino-acid polypeptide reads, in one-letter code: ATP synthase subunit b 2 (180 aa).

A helical transmembrane segment spans residues 33–53 (IFWLLVTLVAIYFLLTRVALP).

Belongs to the ATPase B chain family. In terms of assembly, F-type ATPases have 2 components, F(1) - the catalytic core - and F(0) - the membrane proton channel. F(1) has five subunits: alpha(3), beta(3), gamma(1), delta(1), epsilon(1). F(0) has three main subunits: a(1), b(2) and c(10-14). The alpha and beta chains form an alternating ring which encloses part of the gamma chain. F(1) is attached to F(0) by a central stalk formed by the gamma and epsilon chains, while a peripheral stalk is formed by the delta and b chains.

The protein localises to the cell inner membrane. Its function is as follows. F(1)F(0) ATP synthase produces ATP from ADP in the presence of a proton or sodium gradient. F-type ATPases consist of two structural domains, F(1) containing the extramembraneous catalytic core and F(0) containing the membrane proton channel, linked together by a central stalk and a peripheral stalk. During catalysis, ATP synthesis in the catalytic domain of F(1) is coupled via a rotary mechanism of the central stalk subunits to proton translocation. Component of the F(0) channel, it forms part of the peripheral stalk, linking F(1) to F(0). The b'-subunit is a diverged and duplicated form of b found in plants and photosynthetic bacteria. This chain is ATP synthase subunit b 2 (atpF2), found in Cereibacter sphaeroides (strain ATCC 17025 / ATH 2.4.3) (Rhodobacter sphaeroides).